A 281-amino-acid chain; its full sequence is Proteasome subunit beta (281 aa).

A propeptide spans 1-53 (removed in mature form; by autocatalysis); sequence MEANTRSTGRLPAAFLTPGSSSFMDFLGEHQPEMLPGNRQLPPVQGVIEAPHG. Thr54 serves as the catalytic Nucleophile.

This sequence belongs to the peptidase T1B family. The 20S proteasome core is composed of 14 alpha and 14 beta subunits that assemble into four stacked heptameric rings, resulting in a barrel-shaped structure. The two inner rings, each composed of seven catalytic beta subunits, are sandwiched by two outer rings, each composed of seven alpha subunits. The catalytic chamber with the active sites is on the inside of the barrel. Has probably a gated structure, the ends of the cylinder being occluded by the N-termini of the alpha-subunits. Is likely capped by the proteasome-associated ATPase, ARC.

Its subcellular location is the cytoplasm. It catalyses the reaction Cleavage of peptide bonds with very broad specificity.. The protein operates within protein degradation; proteasomal Pup-dependent pathway. The formation of the proteasomal ATPase ARC-20S proteasome complex, likely via the docking of the C-termini of ARC into the intersubunit pockets in the alpha-rings, may trigger opening of the gate for substrate entry. Interconversion between the open-gate and close-gate conformations leads to a dynamic regulation of the 20S proteasome proteolysis activity. Peptidolytic activity is completely inhibited by lactacystin, and to a lesser extent, by N-acetyl-Leu-Leu-norleucinal (Ac-LLnL) and benzoyloxycarbonyl-Leu-Leu-Leu-vinylsulfone (Z-LLL-VS) in vitro. Component of the proteasome core, a large protease complex with broad specificity involved in protein degradation. The S.coelicolor proteasome is able to cleave oligopeptides after hydrophobic residues, but not after basic or acidic residues, thus displaying chymotrypsin-like activity but not trypsin-like activity. The protein is Proteasome subunit beta of Streptomyces coelicolor (strain ATCC BAA-471 / A3(2) / M145).